The following is a 130-amino-acid chain: Small ribosomal subunit protein uS9 (130 aa).

A disordered region spans residues 104 to 130; the sequence is LTRDPRMKERKKYGLKKARRAPQFSKR. Basic residues predominate over residues 111–130; the sequence is KERKKYGLKKARRAPQFSKR.

The protein belongs to the universal ribosomal protein uS9 family.

This chain is Small ribosomal subunit protein uS9, found in Ruminiclostridium cellulolyticum (strain ATCC 35319 / DSM 5812 / JCM 6584 / H10) (Clostridium cellulolyticum).